We begin with the raw amino-acid sequence, 204 residues long: Synaptosomal-associated protein 25-A (204 aa).

Residues 1-11 (MAEDSDMRNEL) show a composition bias toward basic and acidic residues. The interval 1–25 (MAEDSDMRNELADMQQRADQLADES) is disordered. T-SNARE coiled-coil homology domains lie at 19–81 (DQLA…LNDL) and 138–200 (DARE…ATKM).

It belongs to the SNAP-25 family. As to expression, expressed in several regions throughout the adult brain, including the mesencephalon.

The protein localises to the synapse. It localises to the synaptosome. The protein resides in the cell membrane. Its function is as follows. May play an important role in the synaptic function of specific neuronal systems. Associates with proteins involved in vesicle docking and membrane fusion. This is Synaptosomal-associated protein 25-A from Danio rerio (Zebrafish).